We begin with the raw amino-acid sequence, 158 residues long: Glycine/sarcosine/betaine reductase complex component A (158 aa).

U44 is an active-site residue. Residue U44 is a non-standard amino acid, selenocysteine.

The protein belongs to the GrdA family. In terms of assembly, monomer. Component of the glycine, sarcosine and betaine reductase complexes, together with components B and C.

The enzyme catalyses acetyl phosphate + [thioredoxin]-disulfide + NH4(+) + H2O = [thioredoxin]-dithiol + glycine + phosphate + H(+). It carries out the reaction acetyl phosphate + methylamine + [thioredoxin]-disulfide + H2O = sarcosine + [thioredoxin]-dithiol + phosphate + H(+). It catalyses the reaction acetyl phosphate + trimethylamine + [thioredoxin]-disulfide + H2O = glycine betaine + [thioredoxin]-dithiol + phosphate + H(+). Its function is as follows. In the first step of glycine, betaine and sarcosine reductases, the substrate is bound to component PB via a Schiff base intermediate. Then the PB-activated substrate is nucleophilically attacked by the selenol anion of component PA to transform it to a carboxymethylated selenoether and the respective amine. By action of component PC, acetyl phosphate is formed, leaving component PA in its oxidized state. Finally component PA becomes reduced by the thioredoxin system to start a new catalytic cycle of reductive deamination. The chain is Glycine/sarcosine/betaine reductase complex component A from Clostridium botulinum (strain ATCC 19397 / Type A).